We begin with the raw amino-acid sequence, 552 residues long: HTH-type transcriptional regulator SgrR (552 aa).

Residues 1–116 (MPSGRLQQQF…LISHLGRSFR (116 aa)) enclose the HTH marR-type domain. Residues 26 to 49 (LNELADLLNCSRRHMRTLLNTMQA) constitute a DNA-binding region (H-T-H motif). The interval 163–493 (ELEADIAHHW…RDWQDDAAQW (331 aa)) is solute-binding.

Activates the small RNA gene sgrS under glucose-phosphate stress conditions as well as yfdZ. Represses its own transcription under both stress and non-stress conditions. Might act as a sensor of the intracellular accumulation of phosphoglucose by binding these molecules in its C-terminal solute-binding domain. The sequence is that of HTH-type transcriptional regulator SgrR from Salmonella typhi.